A 347-amino-acid chain; its full sequence is Holliday junction branch migration complex subunit RuvB (347 aa).

Residues 4 to 184 (QDRIVDGHAS…FGIVQRLEFY (181 aa)) form a large ATPase domain (RuvB-L) region. Residues arginine 24, glycine 65, lysine 68, threonine 69, threonine 70, 131 to 133 (EDF), arginine 174, tyrosine 184, and arginine 221 contribute to the ATP site. Threonine 69 is a Mg(2+) binding site. The tract at residues 185 to 255 (SVQDLTHIVK…IADSALNMLN (71 aa)) is small ATPAse domain (RuvB-S). The head domain (RuvB-H) stretch occupies residues 258–347 (HHGFDHMDRR…SQQQDSLPGI (90 aa)). The DNA site is built by arginine 294, arginine 313, and arginine 318.

It belongs to the RuvB family. Homohexamer. Forms an RuvA(8)-RuvB(12)-Holliday junction (HJ) complex. HJ DNA is sandwiched between 2 RuvA tetramers; dsDNA enters through RuvA and exits via RuvB. An RuvB hexamer assembles on each DNA strand where it exits the tetramer. Each RuvB hexamer is contacted by two RuvA subunits (via domain III) on 2 adjacent RuvB subunits; this complex drives branch migration. In the full resolvosome a probable DNA-RuvA(4)-RuvB(12)-RuvC(2) complex forms which resolves the HJ.

Its subcellular location is the cytoplasm. The enzyme catalyses ATP + H2O = ADP + phosphate + H(+). Its function is as follows. The RuvA-RuvB-RuvC complex processes Holliday junction (HJ) DNA during genetic recombination and DNA repair, while the RuvA-RuvB complex plays an important role in the rescue of blocked DNA replication forks via replication fork reversal (RFR). RuvA specifically binds to HJ cruciform DNA, conferring on it an open structure. The RuvB hexamer acts as an ATP-dependent pump, pulling dsDNA into and through the RuvAB complex. RuvB forms 2 homohexamers on either side of HJ DNA bound by 1 or 2 RuvA tetramers; 4 subunits per hexamer contact DNA at a time. Coordinated motions by a converter formed by DNA-disengaged RuvB subunits stimulates ATP hydrolysis and nucleotide exchange. Immobilization of the converter enables RuvB to convert the ATP-contained energy into a lever motion, pulling 2 nucleotides of DNA out of the RuvA tetramer per ATP hydrolyzed, thus driving DNA branch migration. The RuvB motors rotate together with the DNA substrate, which together with the progressing nucleotide cycle form the mechanistic basis for DNA recombination by continuous HJ branch migration. Branch migration allows RuvC to scan DNA until it finds its consensus sequence, where it cleaves and resolves cruciform DNA. The polypeptide is Holliday junction branch migration complex subunit RuvB (Teredinibacter turnerae (strain ATCC 39867 / T7901)).